The following is a 198-amino-acid chain: Formate-dependent nitrite reductase complex subunit NrfG (198 aa).

TPR repeat units lie at residues 73–106 (SEQWALLGEYYLWQNDYSNSLLAYRQALQLRGEN) and 144–177 (ITALMLLASDAFMQANYAQAIELWQKVMDLNSPR).

Functionally, required for formate-dependent nitrite reduction. Not required for the biosynthesis of any of the c-type cytochromes nor for the secretion of the periplasmic cytochromes. The protein is Formate-dependent nitrite reductase complex subunit NrfG (nrfG) of Escherichia coli O157:H7.